The chain runs to 8545 residues: Nuclear anchorage protein 1 (8545 aa).

The tract at residues 1–325 is actin-binding; that stretch reads MSSSPPARPC…VITYVSQFVR (325 aa). The Cytoplasmic segment spans residues 1 to 8494; it reads MSSSPPARPC…QRSRWRRVLR (8494 aa). Positions 23-130 constitute a Calponin-homology (CH) 1 domain; that stretch reads KAQKNTFTRW…LIWQIILHFQ (108 aa). A disordered region spans residues 148-197; that stretch reads TEEPTSSAQPEVVVTAPSPTPSSKKSHSKVSSLSGSKTSLASGEKAPSSP. The segment covering 159 to 190 has biased composition (low complexity); that stretch reads VVVTAPSPTPSSKKSHSKVSSLSGSKTSLASG. Residues 222–328 form the Calponin-homology (CH) 2 domain; sequence QSVEQVFLRW…YVSQFVRMFG (107 aa). Coiled-coil stretches lie at residues 754 to 774, 1072 to 1101, 1215 to 1236, 1324 to 1384, 1574 to 1629, 1725 to 1754, 1950 to 1981, 2103 to 2580, 2682 to 2712, 2852 to 2949, 3002 to 3119, 3178 to 3295, 3346 to 3417, 3482 to 3552, 3587 to 3703, 3781 to 3839, 3902 to 4022, 4114 to 4198, and 4249 to 4320; these read NIRD…NHSR, SFFQ…LMVH, ADIL…EIQA, DTKK…QFED, RSIE…DLVK, ENRN…YEDA, PAII…NYNQ, DNIE…KKSD, SVKE…KIAK, IMQE…NIGK, DQIV…KTVV, DDEK…DEFK, QLQH…PEND, DELI…EKSL, KAEE…ELLD, ALKA…KEQL, AAHD…KTVV, and LDVA…DEFK. Basic and acidic residues predominate over residues 3010 to 3019; the sequence is EAEDVTAKES. Residues 3010–3033 are disordered; sequence EAEDVTAKESAKKKKKDKKKSPQE. Tandem repeats lie at residues 3241-4143, 4144-5097, 5098-6000, 6001-6903, 6904-7806, and 7807-8199. The interval 3241–8199 is 6 X tandem repeat; sequence QVAKDIKDSK…TLIPDLEERA (4959 aa). Residues 3913 to 3922 are compositionally biased toward basic and acidic residues; it reads EAEDVTAKES. Positions 3913 to 3936 are disordered; sequence EAEDVTAKESAKKKKKDKKKSPQE. The span at 4372-4393 shows a compositional bias: basic and acidic residues; it reads ITREDGGDDNKSPDELIDDRGR. The segment at 4372–4395 is disordered; it reads ITREDGGDDNKSPDELIDDRGRST. Coiled-coil stretches lie at residues 4436–4506, 4541–4657, 4735–4793, 4856–4976, 5035–5152, 5203–5274, 5339–5409, 5444–5560, 5638–5696, 5759–5879, 5938–6055, 6106–6177, 6242–6312, 6347–6463, 6541–6599, 6662–6782, 6841–6958, 7009–7080, 7145–7215, 7250–7366, 7444–7502, 7565–7685, 7744–7861, 7912–7983, 8048–8118, 8153–8204, 8273–8329, and 8370–8390; these read DELI…EKSL, KAEE…ELLD, ALKA…KEQL, AAHD…KTVV, DDEK…DEFK, QLQH…PEND, KAEE…IWER, VAED…DINN, and STSI…KEIE. The segment covering 4867–4876 has biased composition (basic and acidic residues); sequence EAEDVTAKES. The tract at residues 4867–4890 is disordered; it reads EAEDVTAKESAKKKKKDKKKSPQE. Residues 5770–5779 are compositionally biased toward basic and acidic residues; that stretch reads EAEDVTAKES. A disordered region spans residues 5770–5793; sequence EAEDVTAKESAKKKKKDKKKSPQE. Over residues 6673–6682 the composition is skewed to basic and acidic residues; it reads EAEDVTAKES. The disordered stretch occupies residues 6673–6696; that stretch reads EAEDVTAKESAKKKKKDKKKSPQE. Basic and acidic residues predominate over residues 7576–7585; sequence EAEDVTAKES. Positions 7576 to 7599 are disordered; sequence EAEDVTAKESAKKKKKDKKKSPQE. 2 disordered regions span residues 8391–8418 and 8449–8480; these read PRLQ…KPYD and SDSE…LSEE. The segment covering 8401–8411 has biased composition (acidic residues); the sequence is DNEDDEDEEKG. Over residues 8451-8464 the composition is skewed to basic and acidic residues; it reads SESRSEFDSLDSRS. Positions 8486–8545 constitute a KASH domain; sequence RSRWRRVLRTALPLQALLVLLMGAACLVPHCDDEYCCQLLNNFAKSFDPSLEFVNGPPPF. A helical; Anchor for type IV membrane protein membrane pass occupies residues 8495-8513; sequence TALPLQALLVLLMGAACLV. Topologically, residues 8514-8545 are perinuclear space; it reads PHCDDEYCCQLLNNFAKSFDPSLEFVNGPPPF.

Belongs to the nesprin family. In terms of assembly, interacts with F-actin via its N-terminal domain. Most likely interacts with unc-84; the interaction is probably required to recruit anc-1 to the nuclear envelope. In terms of tissue distribution, ubiquitously expressed in all postembryonic cells.

It localises to the nucleus outer membrane. The protein resides in the cytoplasm. The protein localises to the cytoskeleton. In terms of biological role, plays a central role in nuclear and mitochondrial anchoring. Probably connects nuclei to the cytoskeleton by interacting with unc-84 at the nuclear envelope and with F-actin in the cytoplasm, creating a bridge across the nuclear envelope between the cytoskeleton and the nucleus. Has a role in positioning of the cell body of the PVQ lumbar interneuron. The polypeptide is Nuclear anchorage protein 1 (Caenorhabditis elegans).